The chain runs to 100 residues: Putative protein adenylyltransferase MJ1379 (100 aa).

The short motif at 31–45 (GSYARGEQTEESDID) is the GSX(10)DXD motif element. 3 residues coordinate Mg(2+): D43, D45, and D77.

The protein belongs to the MntA antitoxin family. In terms of assembly, probably forms a complex with cognate toxin MJ1380. It depends on Mg(2+) as a cofactor.

It catalyses the reaction L-tyrosyl-[protein] + ATP = O-(5'-adenylyl)-L-tyrosyl-[protein] + diphosphate. The enzyme catalyses O-(5'-adenylyl)-L-tyrosyl-[protein] + ATP = O-[5'-(adenylyl-(5'-&gt;3')-adenylyl)]-L-tyrosyl-[protein] + diphosphate. In terms of biological role, probable antitoxin component of a putative type VII toxin-antitoxin (TA) system. Neutralizes cognate toxic MJ1380 by di-AMPylation. The sequence is that of Putative protein adenylyltransferase MJ1379 from Methanocaldococcus jannaschii (strain ATCC 43067 / DSM 2661 / JAL-1 / JCM 10045 / NBRC 100440) (Methanococcus jannaschii).